A 660-amino-acid polypeptide reads, in one-letter code: MKIIYQEQQNECGICVIGMLANAIHDEKYVHDELLEQINLPPNGLSLFEMESYGKKFGLEINSYQLTFQELKELDSKFIIVHFKDHFVIVKNKHENSWEVYDPAKGKYLLTDEKLEKLWTGYAATVAKAFKEIPPVNKSNFFSNFFDFNLVTFYVFIELIIIGISTLLATASRTIITNTVDFGTAVNLVVLVVYFSCLKGLNLLLQVILQLIRNFLFWKQYRGYLGWIIQSLQQKSFVYFSNKSPNQLIERQFYLKEVLSFFNFYIPNLIISCVVALIIGVLIGINQLEFLLIAIAQIVVNAGLFCYDFFFTKKITKKEIPYVELQNKISLQLDENLREEQNKKRFNFLMLNFRKALLQNQNINNQKEINRLTIENIKSFFQQGFDFAILGLGVIGIIEQRYQLSFLFYVFGIQSLFSTYATRIVQFGAAINIYHYCREKLVNLFIETKKDEGIKVNWQCPDEISLENLSVTLNQHVDLANLSLKIKNETVIFGQNGSGKSTFLKILTGRGFEYTGNIKFNNVDLKRCSKEQLFENVYYLKGQNLMQTEANDFGFSEALFNNQNPHIYQLLFDAGVQNQTKLSSGQKQILQLFLLSNIKNKVILLDECMNAIAPEIKNRVYQLLVKPLTLNNFVVLVEHDLSFASEAQNKINLTNYLRNS.

Residues 6 to 126 form the Peptidase C39 domain; sequence QEQQNECGIC…KLWTGYAATV (121 aa). Cysteine 12 is an active-site residue. Transmembrane regions (helical) follow at residues 150–170, 188–208, 265–285, 290–310, 379–399, and 402–422; these read LVTFYVFIELIIIGISTLLAT, LVVLVVYFSCLKGLNLLLQVI, YIPNLIISCVVALIIGVLIGI, FLLIAIAQIVVNAGLFCYDFF, SFFQQGFDFAILGLGVIGIIE, and YQLSFLFYVFGIQSLFSTYAT. The ABC transporter domain maps to 464–657; sequence ISLENLSVTL…QNKINLTNYL (194 aa). 494 to 501 is an ATP binding site; it reads GQNGSGKS.

It belongs to the ABC transporter superfamily.

The protein resides in the cell membrane. In Mycoplasma genitalium (strain ATCC 33530 / DSM 19775 / NCTC 10195 / G37) (Mycoplasmoides genitalium), this protein is Putative ABC transporter ATP-binding MG390.